A 353-amino-acid chain; its full sequence is Uroporphyrinogen decarboxylase (353 aa).

Substrate-binding positions include 25-29 (RQAGR), D74, Y151, S206, and H325.

Belongs to the uroporphyrinogen decarboxylase family. In terms of assembly, homodimer.

It localises to the cytoplasm. It catalyses the reaction uroporphyrinogen III + 4 H(+) = coproporphyrinogen III + 4 CO2. It functions in the pathway porphyrin-containing compound metabolism; protoporphyrin-IX biosynthesis; coproporphyrinogen-III from 5-aminolevulinate: step 4/4. Catalyzes the decarboxylation of four acetate groups of uroporphyrinogen-III to yield coproporphyrinogen-III. The protein is Uroporphyrinogen decarboxylase of Chloroherpeton thalassium (strain ATCC 35110 / GB-78).